A 204-amino-acid polypeptide reads, in one-letter code: Probable dTDP-4-oxo-2,6-dideoxy-D-glucose 3,5-epimerase (204 aa).

Residues Arg-21, Glu-26, 45–47, Lys-70, and His-117 each bind substrate; that span reads QAN. Tyr-130 functions as the Proton donor in the catalytic mechanism. Glu-141 serves as a coordination point for substrate. A disordered region spans residues 164–204; it reads VGEGTPTHRPWRRPRRPGILPDYEGVPGALHRGGGRRGTGP.

The protein belongs to the dTDP-4-dehydrorhamnose 3,5-epimerase family.

Its pathway is antibiotic biosynthesis. Its function is as follows. Involved in the biosynthesis of one of the two 2,6-deoxysugars, dTDP-L-oleandrose, attached to the macrolactone ring oleandolide to produce the aglycone antibiotic oleandomycin. Probably catalyzes the conversion of dTDP-4-keto-2,6-dideoxy-alpha-D-glucose to dTDP-4-keto-2,6-dideoxy-beta-L-galactose. The sequence is that of Probable dTDP-4-oxo-2,6-dideoxy-D-glucose 3,5-epimerase from Streptomyces antibioticus.